Here is a 148-residue protein sequence, read N- to C-terminus: UPF0735 ACT domain-containing protein Dred_1164 (148 aa).

The ACT domain maps to 72 to 147 (TLALLMEHQP…GVREVRLVGQ (76 aa)).

The protein belongs to the UPF0735 family.

The polypeptide is UPF0735 ACT domain-containing protein Dred_1164 (Desulforamulus reducens (strain ATCC BAA-1160 / DSM 100696 / MI-1) (Desulfotomaculum reducens)).